The primary structure comprises 264 residues: Glutamate racemase (264 aa).

Residues 10–11 and 42–43 each bind substrate; these read DS and YG. Cysteine 73 (proton donor/acceptor) is an active-site residue. 74–75 contacts substrate; it reads NT. Residue cysteine 183 is the Proton donor/acceptor of the active site. 184 to 185 contacts substrate; the sequence is TH.

It belongs to the aspartate/glutamate racemases family.

The enzyme catalyses L-glutamate = D-glutamate. The protein operates within cell wall biogenesis; peptidoglycan biosynthesis. In terms of biological role, provides the (R)-glutamate required for cell wall biosynthesis. The polypeptide is Glutamate racemase (Streptococcus agalactiae serotype Ia (strain ATCC 27591 / A909 / CDC SS700)).